The sequence spans 1011 residues: MRKLLSFGRRLGQALLSSMDQEYAGRGYHIRDWELRKIHRAAIKGDAAEVEHCLTRRFRDLDVRDRKDRTVLHLACAHGRVQVVTLLLDRKCQINICDRLNRTPLMKAVHCQEEACAIILLKRGANPNIKDIYGNTALHYAVYNEGTSLAERLLSHHANIEALNKEGNTPLLFAINSRRQHMVEFLLKNQANIHAVDNFKRTALILAVQHNLSSIVTLLLQQNIHISSQDMFGQTAEDYAFCCDLRSIQQQILEHKNKMLKNHLRNDNQETAAMKPENLKKRKKRKKLKKRKEGAKAEHNLKVASEEKQERLERSENKQPQDSQSYGKKKDEMFGNFMLKRDIAMLKEELYAIKNDSLRKEKKYIQEIKSITEINANFEKSVRLNEEMITKKVAQYSQQLNDLKAENARLNSKLEKEKHNKERLEAEVESLHSNLATAINEYNEILERKDLELVLWRADDVSRHETMGSNISQLTDKNELLTEQVHKARVKFNTLKGKLRETRDALREKTLALESVQLDLKQAQHRIKEMKQMHPNGEAKESQSIGKQNSSEERIRQRELENLLLERQLEDARKEGDNKEIVINIHRDCLENGKEDLLEERNKELMNEYNYLKEKLLQYEKEKAEREVIVREFQEELVDHLKKFSMSESPLEGTSHCHINLDETWTSKKKLFQVEIQPEEKHEEFRKVFELISLLNYTADQIRKKNRELEEEATGYKKCLEMTINMLNAFANEDFSCHGDLNTDQLKMDILFKKLKQKFDDLMAEKEAVSSKCVNLAKDNEVLHQELLSMGKVQEKCEKLEKDKKMLEEKVLNLKTHMEKDMVELGKVQEYKSELDERAMQAIEKLEEIHLQKQAEYEKQLEQLNKDNTASLKKKELTLKDVECKFSKMKTAYEDVTTELEEYKEAFAVALKANSSMSEKITKSDKKIAVISTKLFMEKERMEYFLSTLPMRPDPELPCVENLNSIELNRKYIPKMAIRIPTSNPQTSNNCKNSLTELLLRWALAPIYFLL.

ANK repeat units lie at residues 67–96 (KDRTVLHLACAHGRVQVVTLLLDRKCQINI), 100–129 (LNRTPLMKAVHCQEEACAIILLKRGANPNI), 133–162 (YGNTALHYAVYNEGTSLAERLLSHHANIEA), 166–195 (EGNTPLLFAINSRRQHMVEFLLKNQANIHA), and 199–228 (FKRTALILAVQHNLSSIVTLLLQQNIHISS). Disordered regions lie at residues 264–330 (LRND…GKKK) and 533–554 (MHPNGEAKESQSIGKQNSSEER). Coiled coils occupy residues 277-319 (ENLK…ENKQ), 385-639 (NEEM…ELVD), 692-722 (ISLLNYTADQIRKKNRELEEEATGYKKCLEM), and 752-908 (FKKL…EAFA). Basic residues predominate over residues 280-293 (KKRKKRKKLKKRKE). The segment covering 294 to 319 (GAKAEHNLKVASEEKQERLERSENKQ) has biased composition (basic and acidic residues).

The protein is Ankyrin repeat domain-containing protein 18B (ANKRD18B) of Homo sapiens (Human).